Here is a 1052-residue protein sequence, read N- to C-terminus: RTX-III toxin determinant A from serotype 8 (1052 aa).

A run of 3 helical transmembrane segments spans residues 248–265 (GLDIISSLLSGVTASFAL), 275–334 (KVAA…LRVA), and 372–418 (DASI…GILE). Hemolysin-type calcium-binding repeat units follow at residues 744 to 761 (KGSKFRDIFHGADGDDLL), 762 to 779 (NGNDGDDILYGDKGNDEL), 780 to 797 (RGDNGNDQLYGGEGNDKL), 798 to 815 (LGGNGNNYLSGGDGNDEL), 826 to 843 (RGGKGDDKLYGSSGSDLL), and 844 to 861 (DGGEGNDYLEGGDGSDFY).

It belongs to the RTX prokaryotic toxin (TC 1.C.11) family. In terms of processing, palmitoylated by ApxIIIC. The toxin only becomes active when modified.

The protein resides in the secreted. The protein localises to the host cell membrane. Its function is as follows. Does not have hemolytic activity but shows a strong cytotoxicity towards alveolar macrophages and neutrophils. The chain is RTX-III toxin determinant A from serotype 8 (apxIIIA) from Actinobacillus pleuropneumoniae (Haemophilus pleuropneumoniae).